The sequence spans 229 residues: Potassium/proton antiporter CemA (229 aa).

Transmembrane regions (helical) follow at residues 7-27 (FIPF…YLSF), 106-126 (MILH…YSIL), 154-174 (ILLV…ELLI), and 189-209 (IISS…KYWI).

This sequence belongs to the CemA family.

It is found in the plastid. The protein resides in the chloroplast inner membrane. It carries out the reaction K(+)(in) + H(+)(out) = K(+)(out) + H(+)(in). Its function is as follows. Contributes to K(+)/H(+) antiport activity by supporting proton efflux to control proton extrusion and homeostasis in chloroplasts in a light-dependent manner to modulate photosynthesis. Prevents excessive induction of non-photochemical quenching (NPQ) under continuous-light conditions. Indirectly promotes efficient inorganic carbon uptake into chloroplasts. The protein is Potassium/proton antiporter CemA of Spinacia oleracea (Spinach).